Reading from the N-terminus, the 429-residue chain is tRNA (guanine(9)-N1)-methyltransferase (429 aa).

The SAM-dependent MTase TRM10-type domain maps to 131–379; it reads KERKEAQRRI…AVIPIRKYAP (249 aa). S-adenosyl-L-methionine-binding positions include 285 to 286, G305, 309 to 313, C317, L331, and 344 to 346; these read LS, DRNRH, and KAL. D309 functions as the Proton acceptor in the catalytic mechanism. Residues 383–429 are disordered; sequence AKRAKTETKRNEKVEEEVECTSAEGEEDIGVIEESAEVDPEDVFSNQ. The segment covering 386-395 has biased composition (basic and acidic residues); sequence AKTETKRNEK. Residues 396 to 429 are compositionally biased toward acidic residues; the sequence is VEEEVECTSAEGEEDIGVIEESAEVDPEDVFSNQ.

The protein belongs to the class IV-like SAM-binding methyltransferase superfamily. TRM10 family. Monomer.

It is found in the cytoplasm. The protein localises to the nucleus. The catalysed reaction is guanosine(9) in tRNA + S-adenosyl-L-methionine = N(1)-methylguanosine(9) in tRNA + S-adenosyl-L-homocysteine + H(+). S-adenosyl-L-methionine-dependent guanine N(1)-methyltransferase that catalyzes the formation of N(1)-methylguanine at position 9 (m1G9) in cytoplasmic tRNA. The protein is tRNA (guanine(9)-N1)-methyltransferase of Cryptococcus neoformans var. neoformans serotype D (strain B-3501A) (Filobasidiella neoformans).